The sequence spans 388 residues: Xylose isomerase (388 aa).

Residues H54 and D57 contribute to the active site. 7 residues coordinate Mg(2+): E181, E217, H220, D245, D255, D257, and D287.

It belongs to the xylose isomerase family. In terms of assembly, homotetramer. Mg(2+) is required as a cofactor.

The protein resides in the cytoplasm. The enzyme catalyses alpha-D-xylose = alpha-D-xylulofuranose. Functionally, involved in D-xylose catabolism. In Streptomyces murinus, this protein is Xylose isomerase (xylA).